A 481-amino-acid chain; its full sequence is MSGPTWLPPKQPEPARAPQGRALPRGASGPPLAHGAALQPHPRVNFCPLPSEQCYQTPGEPEDRGLAWVGCHGAPQHSQGLPPDRGGLRPGSLDAEIDSLTSMLAELDGGRGHAPRRPDRQAYEPPEPPAYRSGSGPLRPNGGALPPPPLPGSPYGAPTPASYATASTPAGPAFPVQVKVARPVRGCGPPRRGASQASGPSPGPHFPLPGRGEVWGAGYRSHREPGPGVKEEAPGVSGPAGARGGGYGPQVPLSQPPEEELERLTKKLVHDMNHPPSGEYFGRCGGCGEDVVGDGAGVVALDRVFHVGCFVCSTCRAQLRGQHFYAVERRAYCESCYVATLEKCSTCSQPILDRILRAMGKAYHPGCFTCVVCHRGLDGIPFTVDATSQIHCIEDFHRKFAPRCSVCGGAIMPEPGQEETVRIVALDRSFHIGCYKCEECGLLLSSEGECQGCYPLDGHILCKTCSAWRIQELSATVTTDC.

The span at M1 to P12 shows a compositional bias: pro residues. The tract at residues M1–E259 is disordered. R25 is modified (asymmetric dimethylarginine; alternate). R25 carries the post-translational modification Omega-N-methylarginine; alternate. Y55 carries the phosphotyrosine; by SRC modification. S92 is subject to Phosphoserine. The span at D108–A122 shows a compositional bias: basic and acidic residues. An Omega-N-methylarginine modification is found at R111. Composition is skewed to low complexity over residues S153–A173 and P183–G193. Residues R185 and R192 each carry the omega-N-methylarginine modification. Phosphoserine is present on S195. R211 carries the omega-N-methylarginine modification. The segment covering S221–A233 has biased composition (basic and acidic residues). R243 is modified (omega-N-methylarginine). S254 carries the post-translational modification Phosphoserine. 3 LIM zinc-binding domains span residues C284–G321, C344–R403, and C404–E472. The interaction with MAGI1 and PTPN13 stretch occupies residues S474–C481.

This sequence belongs to the zyxin/ajuba family. In terms of assembly, specifically interacts with the ligand binding domain of the thyroid receptor (TR) in the presence of thyroid hormone. Interacts (via the third LIM domain and C-terminus) with PTPN13 (via the second PDZ domain). Interacts (via the second LIM domain or via the third LIM domain plus C-terminus) with PDLIM4 (via PDZ domain). Found in a complex with PTPN13 and PDLIM4. Interacts with SVIL isoform 2. Interacts with LPAR2 but not other LPA receptors. Interacts with PRKAA2. Interacts with MAGI1. Interacts with SCRIB. Phosphorylation at Tyr-55 by SRC is required for enhancement of lysophosphatidic acid-induced cell migration. Tyr-55 is dephosphorylated by PTPN13.

It is found in the cytoplasm. The protein resides in the cytoskeleton. It localises to the cell junction. Its subcellular location is the focal adhesion. The protein localises to the nucleus. Functionally, relays signals from the cell surface to the nucleus to weaken adherens junction and promote actin cytoskeleton reorganization and cell invasiveness. Involved in lysophosphatidic acid-induced cell adhesion and migration. Acts as a transcriptional coactivator for NF-kappa-B and JUN, and mediates the transrepression of these transcription factors induced by glucocorticoid receptor. This chain is Thyroid receptor-interacting protein 6 (TRIP6), found in Bos taurus (Bovine).